Here is a 162-residue protein sequence, read N- to C-terminus: Protein-export protein SecB (162 aa).

It belongs to the SecB family. In terms of assembly, homotetramer, a dimer of dimers. One homotetramer interacts with 1 SecA dimer.

It is found in the cytoplasm. Functionally, one of the proteins required for the normal export of preproteins out of the cell cytoplasm. It is a molecular chaperone that binds to a subset of precursor proteins, maintaining them in a translocation-competent state. It also specifically binds to its receptor SecA. The sequence is that of Protein-export protein SecB from Bradyrhizobium sp. (strain BTAi1 / ATCC BAA-1182).